A 1014-amino-acid polypeptide reads, in one-letter code: Regulator of telomere elongation helicase 1 homolog (1014 aa).

One can recognise a Helicase ATP-binding domain in the interval 7–308 (RGVDVDFPYD…NSADKQFDPE (302 aa)). 42-49 (SPTGTGKT) serves as a coordination point for ATP. A compositionally biased stretch (gly residues) spans 70-85 (GGGGGGGGGGGGGGGS). Residues 70 to 106 (GGGGGGGGGGGGGGGSQQPPYGSQPSGSQHSGGSASQ) are disordered. Residues 86 to 106 (QQPPYGSQPSGSQHSGGSASQ) are compositionally biased toward low complexity. [4Fe-4S] cluster contacts are provided by cysteine 149, cysteine 170, cysteine 175, and cysteine 211. The DEAH box motif lies at 255 to 258 (DEAH). The tract at residues 906-930 (SSKKSNITHAPGNSGAIHEKSGGQE) is disordered.

Belongs to the helicase family. RAD3/XPD subfamily.

It is found in the nucleus. The enzyme catalyses ATP + H2O = ADP + phosphate + H(+). A probable ATP-dependent DNA helicase implicated in DNA replication, DNA repair and the maintenance of genomic stability. Acts as an anti-recombinase to counteract toxic recombination and limit crossover during meiosis. Regulates meiotic recombination and crossover homeostasis by physically dissociating strand invasion events and thereby promotes noncrossover repair by meiotic synthesis dependent strand annealing (SDSA) as well as disassembly of D loop recombination intermediates. In Oryza sativa subsp. japonica (Rice), this protein is Regulator of telomere elongation helicase 1 homolog.